The primary structure comprises 421 residues: MSGKDVNVFEMAQSQVKNACDKLGMEPAVYELLKEPMRVIEVSIPVKMDDGSIKTFKGFRSQHNDAVGPTKGGIRFHQNVSRDEVKALSIWMTFKCSVTGIPYGGGKGGIIVDPSTLSQGELERLSRGYIDGIYKLIGEKVDVPAPDVNTNGQIMSWMVDEYNKLTGQSSIGVITGKPVEFGGSLGRTAATGFGVAVTAREAAAKLGIDMKKAKIAVQGIGNVGSYTVLNCEKLGGTVVAMAEWCKSEGSYAIYNENGLDGQAMLDYMKEHGNLLNFPGAKRISLEEFWASDVDIVIPAALENSITKEVAESIKAKLVCEAANGPTTPEADEVFAERGIVLTPDILTNAGGVTVSYFEWVQNLYGYYWSEEEVEQKEEIAMVKAFESIWKIKEEYNVTMREAAYMHSIKKVAEAMKLRGWY.

2 residues coordinate substrate: lysine 71 and lysine 95. The active-site Proton donor is lysine 107. The NAD(+) site is built by threonine 191 and asparagine 222. Serine 355 is a substrate binding site.

It belongs to the Glu/Leu/Phe/Val dehydrogenases family. Homohexamer.

It carries out the reaction L-glutamate + NAD(+) + H2O = 2-oxoglutarate + NH4(+) + NADH + H(+). The chain is NAD-specific glutamate dehydrogenase (gluD) from Clostridioides difficile (Peptoclostridium difficile).